A 148-amino-acid chain; its full sequence is Putative pre-16S rRNA nuclease (148 aa).

Belongs to the YqgF nuclease family.

It localises to the cytoplasm. Its function is as follows. Could be a nuclease involved in processing of the 5'-end of pre-16S rRNA. The sequence is that of Putative pre-16S rRNA nuclease from Chlamydia trachomatis serovar L2 (strain ATCC VR-902B / DSM 19102 / 434/Bu).